A 300-amino-acid chain; its full sequence is MVLENGFPPYPDFLKIFNSHEDSQLLVIPRSYNRYYPNPLPQTAVLKNPEGRFWNVQWTKSQEVIISLQEGWVKFVKDNGLIDRDFLLFTYDGSRSFWVRIHRNGLPLEPTAPIKIQEISDDEDETNGDGDPHMEEEGDTDENMIVSLSLGSSDEVGDDDDDDYDTAICDEVNKASGSSKKGRVTRKHRDDSLASITPQIFLADPNNPFFISTSSCSRRILVIARQVIKDYGLNFDGTVNLIDGFGELTRKVGKWKDRVVIYKWNEMFTRNKVKQGDVIICEIIREEDVVRSIKVHFVKN.

A DNA-binding region (TF-B3) is located at residues 11 to 105 (PDFLKIFNSH…SFWVRIHRNG (95 aa)). The segment at 115–142 (KIQEISDDEDETNGDGDPHMEEEGDTDE) is disordered. Over residues 119 to 129 (ISDDEDETNGD) the composition is skewed to acidic residues.

It localises to the nucleus. The sequence is that of B3 domain-containing protein At5g57720 from Arabidopsis thaliana (Mouse-ear cress).